The following is a 218-amino-acid chain: Thiopurine S-methyltransferase (218 aa).

Positions 10, 45, 66, and 123 each coordinate S-adenosyl-L-methionine.

Belongs to the class I-like SAM-binding methyltransferase superfamily. TPMT family.

The protein resides in the cytoplasm. The catalysed reaction is S-adenosyl-L-methionine + a thiopurine = S-adenosyl-L-homocysteine + a thiopurine S-methylether.. This chain is Thiopurine S-methyltransferase, found in Xanthomonas euvesicatoria pv. vesicatoria (strain 85-10) (Xanthomonas campestris pv. vesicatoria).